Here is a 939-residue protein sequence, read N- to C-terminus: UvrABC system protein A (939 aa).

32–39 provides a ligand contact to ATP; it reads GLSGSGKS. The C4-type zinc-finger motif lies at 252–279; it reads CPDCGISIGEISPSMFSFNAPFGKCDVC. 2 ABC transporter domains span residues 309-588 and 608-936; these read WGEG…KESI and AGKN…QYLK. 640-647 provides a ligand contact to ATP; the sequence is GVSGSGKS. The C4-type zinc-finger motif lies at 739–765; the sequence is CEACKGDGIVRIEMQFLSDVYVPCDVC.

Belongs to the ABC transporter superfamily. UvrA family. In terms of assembly, forms a heterotetramer with UvrB during the search for lesions.

It is found in the cytoplasm. The UvrABC repair system catalyzes the recognition and processing of DNA lesions. UvrA is an ATPase and a DNA-binding protein. A damage recognition complex composed of 2 UvrA and 2 UvrB subunits scans DNA for abnormalities. When the presence of a lesion has been verified by UvrB, the UvrA molecules dissociate. This is UvrABC system protein A from Clostridium acetobutylicum (strain ATCC 824 / DSM 792 / JCM 1419 / IAM 19013 / LMG 5710 / NBRC 13948 / NRRL B-527 / VKM B-1787 / 2291 / W).